We begin with the raw amino-acid sequence, 139 residues long: Ribonuclease P protein component (139 aa).

Positions 120–139 are disordered; the sequence is KPTTGVEYSPKNEKCESVLP. Residues 129–139 show a composition bias toward basic and acidic residues; sequence PKNEKCESVLP.

Belongs to the RnpA family. As to quaternary structure, consists of a catalytic RNA component (M1 or rnpB) and a protein subunit.

The enzyme catalyses Endonucleolytic cleavage of RNA, removing 5'-extranucleotides from tRNA precursor.. RNaseP catalyzes the removal of the 5'-leader sequence from pre-tRNA to produce the mature 5'-terminus. It can also cleave other RNA substrates such as 4.5S RNA. The protein component plays an auxiliary but essential role in vivo by binding to the 5'-leader sequence and broadening the substrate specificity of the ribozyme. This is Ribonuclease P protein component from Chlamydia caviae (strain ATCC VR-813 / DSM 19441 / 03DC25 / GPIC) (Chlamydophila caviae).